A 186-amino-acid polypeptide reads, in one-letter code: Protein GrpE (186 aa).

Residues 1–22 (MSDSNKEKKKKFADMVSKRKGD) are compositionally biased toward basic and acidic residues. The tract at residues 1 to 35 (MSDSNKEKKKKFADMVSKRKGDDQEDQQTGDLSEE) is disordered. Residues 23–34 (DQEDQQTGDLSE) are compositionally biased toward acidic residues.

This sequence belongs to the GrpE family. In terms of assembly, homodimer.

The protein localises to the cytoplasm. Its function is as follows. Participates actively in the response to hyperosmotic and heat shock by preventing the aggregation of stress-denatured proteins, in association with DnaK and GrpE. It is the nucleotide exchange factor for DnaK and may function as a thermosensor. Unfolded proteins bind initially to DnaJ; upon interaction with the DnaJ-bound protein, DnaK hydrolyzes its bound ATP, resulting in the formation of a stable complex. GrpE releases ADP from DnaK; ATP binding to DnaK triggers the release of the substrate protein, thus completing the reaction cycle. Several rounds of ATP-dependent interactions between DnaJ, DnaK and GrpE are required for fully efficient folding. This is Protein GrpE from Wolbachia pipientis subsp. Culex pipiens (strain wPip).